We begin with the raw amino-acid sequence, 90 residues long: Envelope protein US9 homolog (90 aa).

Topologically, residues 1 to 63 (MEPLRLADAE…IRRRRRQTRA (63 aa)) are intravirion. Residues 12 to 13 (LL) carry the Di-leucine internalization motif motif. Residues 29–38 (EAYYTESDDE) are acidic. Residues 64–84 (AGFVAAFVLVALISGGLGALM) form a helical; Signal-anchor for type II membrane protein membrane-spanning segment. At 85–90 (CWLAYR) the chain is on the virion surface side.

The protein belongs to the alphaherpesvirinae envelope protein US9 family. In terms of processing, phosphorylated on serines within the acidic cluster. Phosphorylation determines whether endocytosed viral US9 traffics to the trans-Golgi network or recycles to the cell membrane.

The protein localises to the virion membrane. The protein resides in the host Golgi apparatus membrane. It is found in the host smooth endoplasmic reticulum membrane. It localises to the host cell membrane. Essential for the anterograde spread of the infection throughout the host nervous system. Together with the gE/gI heterodimer, US9 is involved in the sorting and transport of viral structural components toward axon tips. In Cercopithecine herpesvirus 1 (CeHV-1), this protein is Envelope protein US9 homolog.